The primary structure comprises 434 residues: ATP phosphoribosyltransferase regulatory subunit (434 aa).

Residues 1 to 48 form a disordered region; it reads MYGRGSGAEHSRGSGAEHFWDPRPEASSTVSSSLRPPSGARDLLPREV. The span at 27-38 shows a compositional bias: low complexity; that stretch reads SSTVSSSLRPPS.

This sequence belongs to the class-II aminoacyl-tRNA synthetase family. HisZ subfamily. In terms of assembly, heteromultimer composed of HisG and HisZ subunits.

The protein resides in the cytoplasm. The protein operates within amino-acid biosynthesis; L-histidine biosynthesis; L-histidine from 5-phospho-alpha-D-ribose 1-diphosphate: step 1/9. Required for the first step of histidine biosynthesis. May allow the feedback regulation of ATP phosphoribosyltransferase activity by histidine. The polypeptide is ATP phosphoribosyltransferase regulatory subunit (Synechococcus sp. (strain JA-2-3B'a(2-13)) (Cyanobacteria bacterium Yellowstone B-Prime)).